The primary structure comprises 190 residues: Biphenyl-2,3-diol 1,2-dioxygenase 2 (190 aa).

The 119-residue stretch at 6 to 124 folds into the VOC domain; the sequence is KFAHVVLQTS…DGNFVELQID (119 aa). Fe cation contacts are provided by His-9, His-72, and Glu-120.

It belongs to the extradiol ring-cleavage dioxygenase family. Homohexamer. The cofactor is Fe(2+).

It catalyses the reaction biphenyl-2,3-diol + O2 = 2-hydroxy-6-oxo-6-phenylhexa-2,4-dienoate + H(+). It functions in the pathway xenobiotic degradation; biphenyl degradation; 2-hydroxy-2,4-pentadienoate and benzoate from biphenyl: step 3/4. This Rhodococcus globerulus protein is Biphenyl-2,3-diol 1,2-dioxygenase 2 (bphC2).